Reading from the N-terminus, the 649-residue chain is Sulfate transporter 1.1 (649 aa).

The segment at 1-20 (MSGTINPPDGGGSGARNPPV) is disordered. Over 1–86 (MSGTINPPDG…AREYTLRKFR (86 aa)) the chain is Cytoplasmic. Residues 87–107 (GDLIAGLTIASLCIPQDIGYA) traverse the membrane as a helical segment. Topologically, residues 108–111 (KLAN) are extracellular. A helical membrane pass occupies residues 112-132 (VDPKYGLYSSFVPPLIYAGMG). The Cytoplasmic portion of the chain corresponds to 133–136 (SSRD). The chain crosses the membrane as a helical span at residues 137–157 (IAIGPVAVVSLLVGTLCQAVI). The Extracellular portion of the chain corresponds to 158–168 (DPKKNPEDYLR). The next 2 helical transmembrane spans lie at 169 to 189 (LVFTATFFAGIFQAGLGFLRL) and 190 to 210 (GFLIDFLSHAAVVGFMGGAAI). Residues 211 to 248 (TIALQQLKGFLGIKTFTKKTDIVSVMHSVFKNAEHGWN) lie on the Extracellular side of the membrane. The helical transmembrane segment at 249 to 269 (WQTIVIGASFLTFLLVTKFIG) threads the bilayer. Residues 270–275 (KRNRKL) are Cytoplasmic-facing. Residues 276-296 (FWVPAIAPLISVIISTFFVFI) form a helical membrane-spanning segment. Over 297-334 (FRADKQGVQIVKHIDQGINPISVHKIFFSGKYFTEGIR) the chain is Extracellular. A helical transmembrane segment spans residues 335–355 (IGGIAGMVALTEAVAIARTFA). Topologically, residues 356–367 (AMKDYQIDGNKE) are cytoplasmic. The chain crosses the membrane as a helical span at residues 368-388 (MIALGTMNVVGSMTSCYIATG). The Extracellular segment spans residues 389-404 (SFSRSAVNFMAGVETA). The chain crosses the membrane as a helical span at residues 405–425 (VSNIVMAIVVALTLEFITPLF). Over 426-431 (KYTPNA) the chain is Cytoplasmic. The helical transmembrane segment at 432–452 (ILAAIIISAVLGLIDIDAAIL) threads the bilayer. The Extracellular segment spans residues 453-465 (IWRIDKLDFLACM). A helical membrane pass occupies residues 466-486 (GAFLGVIFISVEIGLLIAVVI). The Cytoplasmic portion of the chain corresponds to 487–649 (SFAKILLQVT…CSTEVAEQQT (163 aa)). An STAS domain is found at 517–640 (QYPDAAQIPG…LTVGDAVAVC (124 aa)).

The protein belongs to the SLC26A/SulP transporter (TC 2.A.53) family. In terms of assembly, interacts with OASA1 through its STAS domain. In terms of tissue distribution, expressed in lateral root cap, root hairs, epidermal and cortical cells of roots.

The protein resides in the membrane. In terms of biological role, high-affinity H(+)/sulfate cotransporter that mediates the uptake of the environmental sulfate by plant roots under low-sulfur conditions. Plays a central role in the regulation of sulfate assimilation. The chain is Sulfate transporter 1.1 (SULTR1;1) from Arabidopsis thaliana (Mouse-ear cress).